A 1399-amino-acid polypeptide reads, in one-letter code: DNA-directed RNA polymerase subunit beta' (1399 aa).

The Zn(2+) site is built by Cys70, Cys72, Cys85, and Cys88. Residues Asp460, Asp462, and Asp464 each coordinate Mg(2+). 4 residues coordinate Zn(2+): Cys814, Cys888, Cys895, and Cys898.

Belongs to the RNA polymerase beta' chain family. As to quaternary structure, the RNAP catalytic core consists of 2 alpha, 1 beta, 1 beta' and 1 omega subunit. When a sigma factor is associated with the core the holoenzyme is formed, which can initiate transcription. Mg(2+) serves as cofactor. It depends on Zn(2+) as a cofactor.

It catalyses the reaction RNA(n) + a ribonucleoside 5'-triphosphate = RNA(n+1) + diphosphate. DNA-dependent RNA polymerase catalyzes the transcription of DNA into RNA using the four ribonucleoside triphosphates as substrates. The polypeptide is DNA-directed RNA polymerase subunit beta' (Pseudomonas fluorescens (strain SBW25)).